We begin with the raw amino-acid sequence, 104 residues long: Thioredoxin-3 (104 aa).

The region spanning 2–104 (SKVIHVTSNE…TLRSTLEANI (103 aa)) is the Thioredoxin domain. Residues Cys31 and Cys34 each act as nucleophile in the active site. A disulfide bond links Cys31 and Cys34.

It belongs to the thioredoxin family.

In terms of biological role, participates in various redox reactions through the reversible oxidation of its active center dithiol to a disulfide and catalyzes dithiol-disulfide exchange reactions. The polypeptide is Thioredoxin-3 (trxC) (Dictyostelium discoideum (Social amoeba)).